A 184-amino-acid polypeptide reads, in one-letter code: MLASASPARRRLLEQAGIPHQVRVSGVDEDQIQHAEPVELVKLLAQAKAQAVAQRLDPSGDAEITAVLGCDSVLSFEGQVFGKPSGPVEAIERWQRMAGSCGSLLTGHCLIRRRQPEVLACVETLVRFAPLSQAEIEAYVASGEPLQCAGGFALEGRGGLCIDGLDGCYSNVIGLSLPWLRTVL.

The active-site Proton acceptor is the Asp-71.

Belongs to the Maf family. A divalent metal cation is required as a cofactor.

The protein resides in the cytoplasm. It carries out the reaction a ribonucleoside 5'-triphosphate + H2O = a ribonucleoside 5'-phosphate + diphosphate + H(+). The catalysed reaction is a 2'-deoxyribonucleoside 5'-triphosphate + H2O = a 2'-deoxyribonucleoside 5'-phosphate + diphosphate + H(+). Nucleoside triphosphate pyrophosphatase. May have a dual role in cell division arrest and in preventing the incorporation of modified nucleotides into cellular nucleic acids. The chain is Nucleoside triphosphate pyrophosphatase from Synechococcus sp. (strain CC9605).